The primary structure comprises 715 residues: Polyribonucleotide nucleotidyltransferase (715 aa).

2 residues coordinate Mg(2+): Asp500 and Asp506. In terms of domain architecture, KH spans 567-634 (PKVKMIRINP…AYIESLVREA (68 aa)). Residues 637–712 (GELYEAKVTR…ERGRVDLSRK (76 aa)) enclose the S1 motif domain.

Belongs to the polyribonucleotide nucleotidyltransferase family. Mg(2+) serves as cofactor.

The protein resides in the cytoplasm. The catalysed reaction is RNA(n+1) + phosphate = RNA(n) + a ribonucleoside 5'-diphosphate. Involved in mRNA degradation. Catalyzes the phosphorolysis of single-stranded polyribonucleotides processively in the 3'- to 5'-direction. This is Polyribonucleotide nucleotidyltransferase from Acholeplasma laidlawii (strain PG-8A).